We begin with the raw amino-acid sequence, 396 residues long: Imidazolonepropionase (396 aa).

His-70 and His-72 together coordinate Fe(3+). His-70 and His-72 together coordinate Zn(2+). Arg-79, Tyr-137, and His-164 together coordinate 4-imidazolone-5-propanoate. N-formimidoyl-L-glutamate is bound at residue Tyr-137. His-227 provides a ligand contact to Fe(3+). His-227 provides a ligand contact to Zn(2+). 4-imidazolone-5-propanoate is bound at residue Gln-230. Asp-301 contacts Fe(3+). Asp-301 is a Zn(2+) binding site. N-formimidoyl-L-glutamate is bound by residues Asn-303 and Gly-305. Residue Ser-306 participates in 4-imidazolone-5-propanoate binding.

The protein belongs to the metallo-dependent hydrolases superfamily. HutI family. It depends on Zn(2+) as a cofactor. Fe(3+) serves as cofactor.

It localises to the cytoplasm. It carries out the reaction 4-imidazolone-5-propanoate + H2O = N-formimidoyl-L-glutamate. It participates in amino-acid degradation; L-histidine degradation into L-glutamate; N-formimidoyl-L-glutamate from L-histidine: step 3/3. Catalyzes the hydrolytic cleavage of the carbon-nitrogen bond in imidazolone-5-propanoate to yield N-formimidoyl-L-glutamate. It is the third step in the universal histidine degradation pathway. This is Imidazolonepropionase from Mycolicibacterium smegmatis (strain ATCC 700084 / mc(2)155) (Mycobacterium smegmatis).